Reading from the N-terminus, the 317-residue chain is MSYSSNTKNELARIEGEQSCCVRAELAALIRMSGTLQLVGSQKLNIKVTTENPAIARRLFKIIKKQYNIHAEVMIRRNARLKKNNYYLLVITHSMGSSEVLADLGIMKKVDDSFDITYRIPQELTQNRCCKRAYLRGAFLGGGSVSDPEKTYHLEFVTHHKELSEGLRDLINSFDLNAKVVERKGNYVVYLKEGDQVVDLLNIVGAHSALLDLENIRVYKEMRNNVNRIVNCETANLSKTVDASIRQIQNIQYIEGSIGINRLPDNLREVAELRVEYQDATLKELGEMINPPIGKSGVNHRLRKLDQIADRERGKSI.

The H-T-H motif DNA-binding region spans 281 to 314 (TLKELGEMINPPIGKSGVNHRLRKLDQIADRERG).

Belongs to the WhiA family.

Functionally, involved in cell division and chromosome segregation. The polypeptide is Probable cell division protein WhiA (Alkaliphilus metalliredigens (strain QYMF)).